We begin with the raw amino-acid sequence, 1385 residues long: Probable serine/threonine-protein kinase DDB_G0268876 (1385 aa).

Positions 758 to 1008 (LELTKEIGRG…QQIITYLENL (251 aa)) constitute a Protein kinase domain. Residues 764–772 (IGRGVSGVV) and Lys-785 each bind ATP. Catalysis depends on Asp-878, which acts as the Proton acceptor. Disordered regions lie at residues 1040–1074 (GGNS…ENKI), 1091–1266 (EVSK…SVGG), and 1287–1339 (ISSS…NNNN). A compositionally biased stretch (polar residues) spans 1055–1073 (VSGSNNNESSTAVSLNENK). Over residues 1107-1144 (SSSTSSSPSTLSAPQSPVGSTSPMGSTSTSPISNNNNR) the composition is skewed to low complexity. A compositionally biased stretch (basic and acidic residues) spans 1145-1162 (PTHDHQQPHQVKWERIVP). Low complexity-rich tracts occupy residues 1189-1232 (NNNN…SSGI), 1242-1266 (FLSS…SVGG), and 1295-1339 (NNNN…NNNN).

Belongs to the protein kinase superfamily. TKL Ser/Thr protein kinase family.

The enzyme catalyses L-seryl-[protein] + ATP = O-phospho-L-seryl-[protein] + ADP + H(+). The catalysed reaction is L-threonyl-[protein] + ATP = O-phospho-L-threonyl-[protein] + ADP + H(+). This chain is Probable serine/threonine-protein kinase DDB_G0268876, found in Dictyostelium discoideum (Social amoeba).